Consider the following 158-residue polypeptide: SUMO-conjugating enzyme UBC9 (158 aa).

The 154-residue stretch at 4-157 folds into the UBC core domain; the sequence is IALSRLAQER…VRAQAKKFSP (154 aa). The tract at residues 13 to 18 is interaction with sumo1; the sequence is RKAWRK. The active-site Glycyl thioester intermediate is the Cys-93.

The protein belongs to the ubiquitin-conjugating enzyme family. Forms a tight complex with RANGAP1 and RANBP2.

It localises to the nucleus. Its pathway is protein modification; protein sumoylation. In terms of biological role, accepts the ubiquitin-like proteins SUMO1, SUMO2 and SUMO3 from the UBLE1A-UBLE1B E1 complex and catalyzes their covalent attachment to other proteins with the help of an E3 ligase such as RANBP2 or CBX4. Essential for nuclear architecture and chromosome segregation. In Pagrus major (Red sea bream), this protein is SUMO-conjugating enzyme UBC9 (ube2i).